The chain runs to 338 residues: 1-aminocyclopropane-1-carboxylate deaminase (338 aa).

At K51 the chain carries N6-(pyridoxal phosphate)lysine. S78 acts as the Nucleophile in catalysis.

It belongs to the ACC deaminase/D-cysteine desulfhydrase family. Homotrimer. Requires pyridoxal 5'-phosphate as cofactor.

The catalysed reaction is 1-aminocyclopropane-1-carboxylate + H2O = 2-oxobutanoate + NH4(+). Its function is as follows. Catalyzes a cyclopropane ring-opening reaction, the irreversible conversion of 1-aminocyclopropane-1-carboxylate (ACC) to ammonia and alpha-ketobutyrate. Allows growth on ACC as a nitrogen source. The protein is 1-aminocyclopropane-1-carboxylate deaminase of Variovorax paradoxus.